The following is a 642-amino-acid chain: Threonine--tRNA ligase (642 aa).

Residues 1–61 enclose the TGS domain; the sequence is MPVITLPDGS…ENDTQLSIIT (61 aa). Positions 243-534 are catalytic; it reads DHRKIGKQLD…LTEEFAGFFP (292 aa). Lys286 is subject to N6-acetyllysine. Zn(2+) contacts are provided by Cys334, His385, and His511.

Belongs to the class-II aminoacyl-tRNA synthetase family. In terms of assembly, homodimer. The cofactor is Zn(2+).

It localises to the cytoplasm. It carries out the reaction tRNA(Thr) + L-threonine + ATP = L-threonyl-tRNA(Thr) + AMP + diphosphate + H(+). Its function is as follows. Catalyzes the attachment of threonine to tRNA(Thr) in a two-step reaction: L-threonine is first activated by ATP to form Thr-AMP and then transferred to the acceptor end of tRNA(Thr). Also edits incorrectly charged L-seryl-tRNA(Thr). The chain is Threonine--tRNA ligase from Shigella dysenteriae serotype 1 (strain Sd197).